The primary structure comprises 229 residues: Orotidine 5'-phosphate decarboxylase (229 aa).

Residues aspartate 10, lysine 32, 59–68 (DLKFHDIPNT), threonine 119, arginine 180, glutamine 189, glycine 209, and arginine 210 contribute to the substrate site. Catalysis depends on lysine 61, which acts as the Proton donor.

It belongs to the OMP decarboxylase family. Type 1 subfamily. As to quaternary structure, homodimer.

It catalyses the reaction orotidine 5'-phosphate + H(+) = UMP + CO2. Its pathway is pyrimidine metabolism; UMP biosynthesis via de novo pathway; UMP from orotate: step 2/2. Catalyzes the decarboxylation of orotidine 5'-monophosphate (OMP) to uridine 5'-monophosphate (UMP). The chain is Orotidine 5'-phosphate decarboxylase from Legionella pneumophila (strain Paris).